The sequence spans 815 residues: Protein-glutamine gamma-glutamyltransferase K (815 aa).

Over residues 1-10 the composition is skewed to basic and acidic residues; the sequence is MEGPRSDVGR. Disordered regions lie at residues 1 to 48 and 62 to 101; these read MEGP…SFWA and DDWG…AAGD. Pro residues predominate over residues 16–25; the sequence is WQPPTTPSPE. Residue Thr-21 is modified to Phosphothreonine. A phosphoserine mark is found at Ser-23, Ser-71, Ser-83, Ser-91, and Ser-94. Over residues 66 to 78 the composition is skewed to low complexity; it reads PEPSGSRSRGTSS. Residues 79-91 are compositionally biased toward basic and acidic residues; it reads RGRDSRGGRRPES. Catalysis depends on residues Cys-376, His-435, and Asp-458. Positions 498, 500, 547, and 552 each coordinate Ca(2+). Residues 791–815 form a disordered region; the sequence is GSGFSDAGGDSRSGENIPMAYRGGA. Ser-803 carries the post-translational modification Phosphoserine.

Belongs to the transglutaminase superfamily. Transglutaminase family. As to quaternary structure, interacts with PLAAT4. It depends on Ca(2+) as a cofactor. In terms of processing, tyrosine-phosphorylated. Palmitoylated. Post-translationally, the membrane anchorage region possesses a cluster of five cysteines within which fatty acid(s) may become thioester-linked. It is subject to phorbol ester-stimulated phosphorylation and is hypersensitive to proteolysis, which releases the enzyme in a soluble form. Expressed in large amounts in epithelial tissues (lung, liver and kidney).

Its subcellular location is the membrane. The enzyme catalyses L-glutaminyl-[protein] + L-lysyl-[protein] = [protein]-L-lysyl-N(6)-5-L-glutamyl-[protein] + NH4(+). Functionally, catalyzes the cross-linking of proteins and the conjugation of polyamines to proteins. Responsible for cross-linking epidermal proteins during formation of the stratum corneum. Involved in cell proliferation. The protein is Protein-glutamine gamma-glutamyltransferase K (Tgm1) of Mus musculus (Mouse).